The following is a 382-amino-acid chain: Succinate--CoA ligase [ADP-forming] subunit beta 1 (382 aa).

Residues lysine 9–glutamate 235 enclose the ATP-grasp domain. ATP contacts are provided by residues lysine 45, glycine 52–glycine 54, glutamate 91, leucine 94, and glutamate 99. Positions 191 and 204 each coordinate Mg(2+). Asparagine 255 contributes to the substrate binding site.

Belongs to the succinate/malate CoA ligase beta subunit family. Heterotetramer of two alpha and two beta subunits. It depends on Mg(2+) as a cofactor.

The enzyme catalyses succinate + ATP + CoA = succinyl-CoA + ADP + phosphate. The catalysed reaction is GTP + succinate + CoA = succinyl-CoA + GDP + phosphate. The protein operates within carbohydrate metabolism; tricarboxylic acid cycle; succinate from succinyl-CoA (ligase route): step 1/1. Succinyl-CoA synthetase functions in the citric acid cycle (TCA), coupling the hydrolysis of succinyl-CoA to the synthesis of either ATP or GTP and thus represents the only step of substrate-level phosphorylation in the TCA. The beta subunit provides nucleotide specificity of the enzyme and binds the substrate succinate, while the binding sites for coenzyme A and phosphate are found in the alpha subunit. The polypeptide is Succinate--CoA ligase [ADP-forming] subunit beta 1 (Archaeoglobus fulgidus (strain ATCC 49558 / DSM 4304 / JCM 9628 / NBRC 100126 / VC-16)).